Consider the following 441-residue polypeptide: Transcription factor TOXE (441 aa).

Residues 14 to 40 form a basic DNA-binding region region; sequence TDINERRKLQNRVAQRKYRTRQKTRMK. The disordered stretch occupies residues 209 to 243; that stretch reads FEPNDQRKTENLPREPCGSCPSSSHGYSPTSGNPS. Basic and acidic residues predominate over residues 212–221; that stretch reads NDQRKTENLP. Residues 228-241 show a composition bias toward polar residues; that stretch reads CPSSSHGYSPTSGN. ANK repeat units follow at residues 289-318, 322-351, 355-384, and 413-440; these read DQFS…PLDI, SGKT…EMLA, EGNS…SCRE, and EGMT…SANV.

It belongs to the bZIP family. As to quaternary structure, monomer.

It is found in the nucleus. Transcription factor, part of the diffuse TOX2 gene cluster that mediates the biosynthesis of the HC-toxin, cyclic tetrapeptide of structure cyclo(D-Pro-L-Ala-D-Ala-L-Aeo), where Aeo stands for 2-amino-9,10-epoxi-8-oxodecanoic acid. HC-toxin is a determinant of specificity and virulence in the interaction between the producing fungus and its host, maize. TOXE is a pathway-specific transcription factor which coordinates the expression of genes involved in HC-toxin biosynthesis. Binds to the tox-box, a 10-bp motif with the consensus 5'-ATCTCNCGNA-3', which is found in the promoter of all genes involved in HC-toxin biosynthesis. Required for pathogenicity of the fungus on maize. The protein is Transcription factor TOXE of Cochliobolus carbonum (Maize leaf spot fungus).